A 47-amino-acid polypeptide reads, in one-letter code: PhoP/PhoQ regulator MgrB (47 aa).

A helical membrane pass occupies residues 6-26 (WVALVVVVLACLLLWAQVFNM).

Belongs to the MgrB family. May form homooligomers. Probably interacts with the periplasmic domain of PhoQ.

The protein localises to the cell inner membrane. Its function is as follows. PhoP-regulated transcription is redox-sensitive, being activated when the periplasm becomes more reducing. MgrB acts between DsbA/DsbB and PhoP/PhoQ in this pathway. Represses PhoP/PhoQ signaling, possibly by binding to the periplasmic domain of PhoQ, altering its activity and that of downstream effector PhoP. The protein is PhoP/PhoQ regulator MgrB of Escherichia coli O1:K1 / APEC.